The chain runs to 274 residues: MVKGPGLYTEIGKKARDLLYRDYQGDQKFSVTTYSSTGVAITTTGTNKGSLFLGDVATQVKNNNFTADVKVSTDSSLLTTLTFDEPAPGLKVIVQAKLPDHKSGKAEVQYFHDYAGISTSVGFTATPIVNFSGVVGTNGLSLGTDVAYNTESGNFKHFNAGFNFTKDDLTASLILNDKGEKLNASYYQIVSPSTVVGAEISHNFTTKENAITVGTQHALDPLTTVKARVNNAGVANALIQHEWRPKSFFTVSGEVDSKAIDKSAKVGIALALKP.

The residue at position 76 (Ser76) is a Phosphoserine.

This sequence belongs to the eukaryotic mitochondrial porin (TC 1.B.8.1) family. As to quaternary structure, interacts with KIN14F/KP1. Interacts with FBA6 and GAPC1. Expressed in leaf tips, anthers and stigma.

The protein localises to the cell membrane. Its subcellular location is the mitochondrion outer membrane. Its function is as follows. Forms a channel through the mitochondrial outer membrane that allows diffusion of small hydrophilic molecules. The channel adopts an open conformation at low or zero membrane potential and a closed conformation at potentials above 30-40 mV. The open state has a weak anion selectivity whereas the closed state is cation-selective. The chain is Mitochondrial outer membrane protein porin 3 (VDAC3) from Arabidopsis thaliana (Mouse-ear cress).